Consider the following 876-residue polypeptide: Bifunctional uridylyltransferase/uridylyl-removing enzyme (876 aa).

Positions 1–332 are uridylyltransferase; that stretch reads MPYQSPITFQ…NNGEEAEAVI (332 aa). The uridylyl-removing stretch occupies residues 333-692; that stretch reads IDDDFQRRGN…LSKKATRGGT (360 aa). An HD domain is found at 451 to 573; the sequence is VDEHSIRLLK…VRDEERLEYL (123 aa). ACT domains lie at 693–777 and 800–876; these read EVFI…RIPR and LMEF…PSAQ.

The protein belongs to the GlnD family. Requires Mg(2+) as cofactor.

The enzyme catalyses [protein-PII]-L-tyrosine + UTP = [protein-PII]-uridylyl-L-tyrosine + diphosphate. It carries out the reaction [protein-PII]-uridylyl-L-tyrosine + H2O = [protein-PII]-L-tyrosine + UMP + H(+). With respect to regulation, uridylyltransferase (UTase) activity is inhibited by glutamine, while glutamine activates uridylyl-removing (UR) activity. In terms of biological role, modifies, by uridylylation and deuridylylation, the PII regulatory proteins (GlnB and homologs), in response to the nitrogen status of the cell that GlnD senses through the glutamine level. Under low glutamine levels, catalyzes the conversion of the PII proteins and UTP to PII-UMP and PPi, while under higher glutamine levels, GlnD hydrolyzes PII-UMP to PII and UMP (deuridylylation). Thus, controls uridylylation state and activity of the PII proteins, and plays an important role in the regulation of nitrogen assimilation and metabolism. The polypeptide is Bifunctional uridylyltransferase/uridylyl-removing enzyme (Vibrio cholerae serotype O1 (strain ATCC 39315 / El Tor Inaba N16961)).